The primary structure comprises 125 residues: MKSFIVALCVVGCVLANDPEAVVVRNDYVQNPEGSYNYAFESNNGISGQAEGKFKVFDKDSAAVVVAGSSQYKGSDGKVYSLTYVADENGYQPQADFLPTPPPTVAIPEYIARAVAYNLAHSAKV.

The N-terminal stretch at 1–16 (MKSFIVALCVVGCVLA) is a signal peptide. In terms of domain architecture, Chitin-binding type R&amp;R spans 33–102 (EGSYNYAFES…PQADFLPTPP (70 aa)).

In terms of biological role, component of the cuticle of the larva of tobacco hornworm. The protein is Larval cuticle protein LCP-14 (LCP-14) of Manduca sexta (Tobacco hawkmoth).